The sequence spans 67 residues: Non-specific lipid-transfer protein 2 (67 aa).

Disulfide bonds link Cys3–Cys35, Cys11–Cys25, Cys26–Cys61, and Cys37–Cys67.

The protein belongs to the plant LTP family. As to quaternary structure, monomer. In terms of processing, disulfide bonds.

Functionally, plant non-specific lipid-transfer proteins transfer phospholipids as well as galactolipids across membranes. May play a role in wax or cutin deposition in the cell walls of expanding epidermal cells and certain secretory tissues. The chain is Non-specific lipid-transfer protein 2 from Apium graveolens var. rapaceum (Celeriac).